A 147-amino-acid chain; its full sequence is Prefoldin subunit alpha (147 aa).

Belongs to the prefoldin alpha subunit family. Heterohexamer of two alpha and four beta subunits.

The protein localises to the cytoplasm. Its function is as follows. Molecular chaperone capable of stabilizing a range of proteins. Seems to fulfill an ATP-independent, HSP70-like function in archaeal de novo protein folding. This is Prefoldin subunit alpha from Saccharolobus islandicus (strain L.S.2.15 / Lassen #1) (Sulfolobus islandicus).